Consider the following 173-residue polypeptide: Crossover junction endodeoxyribonuclease RuvC (173 aa).

Active-site residues include Asp8, Glu67, and Asp139. Residues Asp8, Glu67, and Asp139 each contribute to the Mg(2+) site.

Belongs to the RuvC family. Homodimer which binds Holliday junction (HJ) DNA. The HJ becomes 2-fold symmetrical on binding to RuvC with unstacked arms; it has a different conformation from HJ DNA in complex with RuvA. In the full resolvosome a probable DNA-RuvA(4)-RuvB(12)-RuvC(2) complex forms which resolves the HJ. Mg(2+) serves as cofactor.

Its subcellular location is the cytoplasm. The catalysed reaction is Endonucleolytic cleavage at a junction such as a reciprocal single-stranded crossover between two homologous DNA duplexes (Holliday junction).. The RuvA-RuvB-RuvC complex processes Holliday junction (HJ) DNA during genetic recombination and DNA repair. Endonuclease that resolves HJ intermediates. Cleaves cruciform DNA by making single-stranded nicks across the HJ at symmetrical positions within the homologous arms, yielding a 5'-phosphate and a 3'-hydroxyl group; requires a central core of homology in the junction. The consensus cleavage sequence is 5'-(A/T)TT(C/G)-3'. Cleavage occurs on the 3'-side of the TT dinucleotide at the point of strand exchange. HJ branch migration catalyzed by RuvA-RuvB allows RuvC to scan DNA until it finds its consensus sequence, where it cleaves and resolves the cruciform DNA. The protein is Crossover junction endodeoxyribonuclease RuvC of Serratia proteamaculans (strain 568).